A 220-amino-acid polypeptide reads, in one-letter code: Histone deacetylase complex subunit SAP30 (220 aa).

The interval 1 to 129 (MNGFTPDEMS…QSVRNRRKRK (129 aa)) is interaction with NCOR1. Position 5 is a phosphothreonine (Thr-5). An Atypical zinc finger spans residues 67–115 (CCLREDGERCGRAAGNASFSKRIQKSISQKKVKIELDKSARHLYICDYH). Residue Lys-87 forms a Glycyl lysine isopeptide (Lys-Gly) (interchain with G-Cter in SUMO2) linkage. Positions 123-143 (RNRRKRKGSDDDGGDSPVQDI) are disordered. An interaction with SIN3A region spans residues 130–220 (GSDDDGGDSP…SDLKVDSGVH (91 aa)). 2 positions are modified to phosphoserine: Ser-131 and Ser-138. At Thr-145 the chain carries Phosphothreonine. Glycyl lysine isopeptide (Lys-Gly) (interchain with G-Cter in SUMO2) cross-links involve residues Lys-194, Lys-205, and Lys-214.

Belongs to the SAP30 family. In terms of assembly, component of the histone deacetylase complex that includes at least SIN3A, HDAC1 and HDAC2. Found in a complex composed of at least SINHCAF, SIN3A, HDAC1, SAP30, RBBP4, OGT and TET1. Interacts with HDAC1. Interacts with SIN3A, SIN3B, HDAC2, RBBP4 and NCOR1. Interacts with SAMSN1. Interacts with HCFC1. Interacts with SAP30BP. As to expression, expressed in all tissues tested with highest levels in pancreas, ovary, PBL, spleen and thymus; lowest levels in brain, placenta, lung and kidney.

The protein resides in the nucleus. Functionally, involved in the functional recruitment of the Sin3-histone deacetylase complex (HDAC) to a specific subset of N-CoR corepressor complexes. Capable of transcription repression by N-CoR. Active in deacetylating core histone octamers (when in a complex) but inactive in deacetylating nucleosomal histones. Its function is as follows. (Microbial infection) Involved in transcriptional repression of HHV-1 genes TK and gC. The polypeptide is Histone deacetylase complex subunit SAP30 (Homo sapiens (Human)).